The sequence spans 107 residues: Thioredoxin (107 aa).

Residues 2-107 enclose the Thioredoxin domain; that stretch reads SEVLHINDAD…QLANFINQHI (106 aa). A disulfide bridge connects residues cysteine 32 and cysteine 35.

It belongs to the thioredoxin family.

Participates in various redox reactions through the reversible oxidation of its active center dithiol to a disulfide and catalyzes dithiol-disulfide exchange reactions. This Haemophilus influenzae (strain ATCC 51907 / DSM 11121 / KW20 / Rd) protein is Thioredoxin (trxA).